A 728-amino-acid polypeptide reads, in one-letter code: 1,4-alpha-glucan branching enzyme GlgB (728 aa).

Asp405 (nucleophile) is an active-site residue. The active-site Proton donor is Glu458.

This sequence belongs to the glycosyl hydrolase 13 family. GlgB subfamily. In terms of assembly, monomer.

It carries out the reaction Transfers a segment of a (1-&gt;4)-alpha-D-glucan chain to a primary hydroxy group in a similar glucan chain.. It participates in glycan biosynthesis; glycogen biosynthesis. Catalyzes the formation of the alpha-1,6-glucosidic linkages in glycogen by scission of a 1,4-alpha-linked oligosaccharide from growing alpha-1,4-glucan chains and the subsequent attachment of the oligosaccharide to the alpha-1,6 position. In Citrobacter koseri (strain ATCC BAA-895 / CDC 4225-83 / SGSC4696), this protein is 1,4-alpha-glucan branching enzyme GlgB.